The sequence spans 185 residues: Translocon-associated protein subunit gamma (185 aa).

Met1 carries the N-acetylmethionine modification. At 1–27 (MAPKGSSKQQSEEDLLLQDFSRNLSAK) the chain is on the lumenal side. Phosphoserine is present on residues Ser7 and Ser11. The chain crosses the membrane as a helical span at residues 28–48 (SSALFFGNAFIVSAIPIWLYW). Over 49 to 54 (RIWHMD) the chain is Cytoplasmic. A helical transmembrane segment spans residues 55–76 (LIQSAVLYSVMTLVSTYLVAFA). At 77–135 (YKNVKFVLKHKVAQKREDAVSKEVTRKLSEADNRKMSRKEKDERILWKKNEVADYEATT) the chain is on the lumenal side. Ser105 carries the post-translational modification Phosphoserine. The chain crosses the membrane as a helical span at residues 136-157 (FSIFYNNTLFLVVVIVASFFIL). Topologically, residues 158-163 (KNFNPT) are cytoplasmic. A helical transmembrane segment spans residues 164–184 (VNYILSISASSGLIALLSTGS).

Belongs to the TRAP-gamma family. Heterotetramer of TRAP-alpha, TRAP-beta, TRAP-delta and TRAP-gamma.

The protein localises to the endoplasmic reticulum membrane. In terms of biological role, TRAP proteins are part of a complex whose function is to bind calcium to the ER membrane and thereby regulate the retention of ER resident proteins. This is Translocon-associated protein subunit gamma (SSR3) from Homo sapiens (Human).